We begin with the raw amino-acid sequence, 951 residues long: Cation channel sperm-associated auxiliary subunit epsilon (951 aa).

The signal sequence occupies residues 1 to 19 (MSAREVAVLLLWLSCYGSA). Over 20–903 (LWRYSTNSPN…ETFGLIPSPS (884 aa)) the chain is Extracellular. Disulfide bonds link C57–C71, C101–C206, C246–C336, and C410–C413. N61 and N114 each carry an N-linked (GlcNAc...) asparagine glycan. 5 N-linked (GlcNAc...) asparagine glycosylation sites follow: N414, N472, N487, N493, and N535. Disulfide bonds link C583–C690, C703–C885, C719–C752, and C804–C835. N796 is a glycosylation site (N-linked (GlcNAc...) asparagine). Residues N854, N881, and N886 are each glycosylated (N-linked (GlcNAc...) asparagine). Residues 904–924 (VYLVASFLFVLMLLFFTILVL) form a helical membrane-spanning segment. Residues 925–951 (SYFRYMRIYRRYIYEPLHKPQRKRKKN) are Cytoplasmic-facing.

The protein belongs to the CATSPERD family. As to quaternary structure, component of the CatSper complex or CatSpermasome composed of the core pore-forming members CATSPER1, CATSPER2, CATSPER3 and CATSPER4 as well as auxiliary members CATSPERB, CATSPERG, CATSPERD, CATSPERE, CATSPERZ, C2CD6/CATSPERT, TMEM249, TMEM262 and EFCAB9. HSPA1 may be an additional auxiliary complex member. The core complex members CATSPER1, CATSPER2, CATSPER3 and CATSPER4 form a heterotetrameric channel. The auxiliary CATSPERB, CATSPERG, CATSPERD and CATSPERE subunits form a pavilion-like structure over the pore which stabilizes the complex through interactions with CATSPER4, CATSPER3, CATSPER1 and CATSPER2 respectively. TMEM262/CATSPERH interacts with CATSPERB, further stabilizing the complex. C2CD6/CATSPERT interacts at least with CATSPERD and is required for targeting the CatSper complex in the flagellar membrane.

It is found in the cell projection. The protein localises to the cilium. Its subcellular location is the flagellum membrane. In terms of biological role, auxiliary component of the CatSper complex, a complex involved in sperm cell hyperactivation. Sperm cell hyperactivation is needed for sperm motility which is essential late in the preparation of sperm for fertilization. In Homo sapiens (Human), this protein is Cation channel sperm-associated auxiliary subunit epsilon.